We begin with the raw amino-acid sequence, 283 residues long: Daunorubicin resistance ABC transporter permease protein DrrB1 (283 aa).

Residues 53–280 (VQLIDIVLMP…PLTMRLYRNK (228 aa)) enclose the ABC transmembrane type-2 domain. 6 helical membrane passes run 58–78 (IVLM…GAFA), 85–105 (LQFY…VYTG), 150–170 (VFLG…VVGA), 171–191 (MLVL…LGVV), 198–218 (VSGT…IFVM), and 252–272 (FWDV…FAPL).

It belongs to the ABC-2 integral membrane protein family. The complex is probably composed of two ATP-binding proteins (DrrA1) and two transmembrane proteins (DrrB1).

It is found in the cell membrane. In terms of biological role, part of the ABC transporter complex DrrA1B1 involved in daunorubicin efflux. Responsible for the translocation of the substrate across the membrane. Confers self-resistance to daunorubicin, an antibiotic produced by S.coeruleorubidus. In Streptomyces coeruleorubidus, this protein is Daunorubicin resistance ABC transporter permease protein DrrB1.